We begin with the raw amino-acid sequence, 204 residues long: Proteasome subunit beta 1 (204 aa).

Residues 1–9 (MSYEYGTGA) constitute a propeptide, removed in mature form; by autocatalysis. Residue Thr-10 is the Nucleophile of the active site.

The protein belongs to the peptidase T1B family. As to quaternary structure, the 20S proteasome core is composed of 14 alpha and 14 beta subunits that assemble into four stacked heptameric rings, resulting in a barrel-shaped structure. The two inner rings, each composed of seven catalytic beta subunits, are sandwiched by two outer rings, each composed of seven alpha subunits. The catalytic chamber with the active sites is on the inside of the barrel. Has a gated structure, the ends of the cylinder being occluded by the N-termini of the alpha-subunits. Is capped at one or both ends by the proteasome regulatory ATPase, PAN.

It is found in the cytoplasm. It carries out the reaction Cleavage of peptide bonds with very broad specificity.. The formation of the proteasomal ATPase PAN-20S proteasome complex, via the docking of the C-termini of PAN into the intersubunit pockets in the alpha-rings, triggers opening of the gate for substrate entry. Interconversion between the open-gate and close-gate conformations leads to a dynamic regulation of the 20S proteasome proteolysis activity. Component of the proteasome core, a large protease complex with broad specificity involved in protein degradation. This is Proteasome subunit beta 1 from Hyperthermus butylicus (strain DSM 5456 / JCM 9403 / PLM1-5).